The primary structure comprises 173 residues: uncharacterized protein (173 aa).

Transmembrane regions (helical) follow at residues 13 to 35 (LQVILKFFFALLCFCIILFPLLS), 50 to 72 (IIFIYYFMSLYSLNIFSIFFLGL), 107 to 129 (NYLINFVVFCFYCLFILNFKYLL), and 139 to 161 (GYLIIFFQSLTTIFSYNIIRLIL).

The protein resides in the cell membrane. This is an uncharacterized protein from Rickettsia prowazekii (strain Madrid E).